Consider the following 80-residue polypeptide: Putative membrane protein insertion efficiency factor (80 aa).

This sequence belongs to the UPF0161 family.

Its subcellular location is the cell inner membrane. Could be involved in insertion of integral membrane proteins into the membrane. The sequence is that of Putative membrane protein insertion efficiency factor from Paracoccus denitrificans (strain Pd 1222).